Reading from the N-terminus, the 469-residue chain is Cysteine--tRNA ligase (469 aa).

Cys29 serves as a coordination point for Zn(2+). The 'HIGH' region motif lies at Pro31–Asn41. Zn(2+) is bound by residues Cys210, His235, and Glu239. A 'KMSKS' region motif is present at residues Lys267–Ser271. An ATP-binding site is contributed by Lys270.

This sequence belongs to the class-I aminoacyl-tRNA synthetase family. As to quaternary structure, monomer. The cofactor is Zn(2+).

It localises to the cytoplasm. It catalyses the reaction tRNA(Cys) + L-cysteine + ATP = L-cysteinyl-tRNA(Cys) + AMP + diphosphate. The protein is Cysteine--tRNA ligase of Thermosipho melanesiensis (strain DSM 12029 / CIP 104789 / BI429).